Reading from the N-terminus, the 168-residue chain is CDP-archaeol synthase (168 aa).

5 consecutive transmembrane segments (helical) span residues 7-27 (PLES…PVLL), 55-75 (GLAT…SATC), 80-100 (YAAG…GAFI), 109-129 (GAPA…LALY), and 130-150 (AAGY…VIAL).

This sequence belongs to the CDP-archaeol synthase family. The cofactor is Mg(2+).

It localises to the cell membrane. The enzyme catalyses 2,3-bis-O-(geranylgeranyl)-sn-glycerol 1-phosphate + CTP + H(+) = CDP-2,3-bis-O-(geranylgeranyl)-sn-glycerol + diphosphate. It functions in the pathway membrane lipid metabolism; glycerophospholipid metabolism. Its function is as follows. Catalyzes the formation of CDP-2,3-bis-(O-geranylgeranyl)-sn-glycerol (CDP-archaeol) from 2,3-bis-(O-geranylgeranyl)-sn-glycerol 1-phosphate (DGGGP) and CTP. This reaction is the third ether-bond-formation step in the biosynthesis of archaeal membrane lipids. The sequence is that of CDP-archaeol synthase from Hyperthermus butylicus (strain DSM 5456 / JCM 9403 / PLM1-5).